Here is a 109-residue protein sequence, read N- to C-terminus: Large ribosomal subunit protein uL24 (109 aa).

This sequence belongs to the universal ribosomal protein uL24 family. As to quaternary structure, part of the 50S ribosomal subunit.

Functionally, one of two assembly initiator proteins, it binds directly to the 5'-end of the 23S rRNA, where it nucleates assembly of the 50S subunit. One of the proteins that surrounds the polypeptide exit tunnel on the outside of the subunit. This chain is Large ribosomal subunit protein uL24, found in Rickettsia massiliae (strain Mtu5).